The primary structure comprises 103 residues: Large ribosomal subunit protein uL24 (103 aa).

Belongs to the universal ribosomal protein uL24 family. Part of the 50S ribosomal subunit.

Its function is as follows. One of two assembly initiator proteins, it binds directly to the 5'-end of the 23S rRNA, where it nucleates assembly of the 50S subunit. In terms of biological role, one of the proteins that surrounds the polypeptide exit tunnel on the outside of the subunit. The sequence is that of Large ribosomal subunit protein uL24 from Alkaliphilus metalliredigens (strain QYMF).